An 88-amino-acid polypeptide reads, in one-letter code: Centromere protein W (88 aa).

Belongs to the CENP-W/WIP1 family. Heterodimer with CENPT; this dimer coassembles with CENPS-CENPX heterodimers at centromeres to form the tetrameric CENP-T-W-S-X complex, which is a subcomplex of the large constitutive centromere-associated network (CCAN, also known as the interphase centromere complex or ICEN). Interacts with NPM1. Highly expressed in ovary, liver, lung and pancreas and to a lower extent in breast and gastrointestinal tract cancers; such as those of the colon, rectum and stomach. Overexpressed in high grade breast invasive tumors. Expressed in many cancer cell types.

It is found in the nucleus. It localises to the chromosome. The protein localises to the centromere. The protein resides in the kinetochore. Its subcellular location is the nucleus matrix. It is found in the nucleolus. In terms of biological role, component of the CENPA-NAC (nucleosome-associated) complex, a complex that plays a central role in assembly of kinetochore proteins, mitotic progression and chromosome segregation. The CENPA-NAC complex recruits the CENPA-CAD (nucleosome distal) complex and may be involved in incorporation of newly synthesized CENPA into centromeres. Part of a nucleosome-associated complex that binds specifically to histone H3-containing nucleosomes at the centromere, as opposed to nucleosomes containing CENPA. Component of the heterotetrameric CENP-T-W-S-X complex that binds and supercoils DNA, and plays an important role in kinetochore assembly. CENPW has a fundamental role in kinetochore assembly and function. It is one of the inner kinetochore proteins, with most further proteins binding downstream. Required for normal chromosome organization and normal progress through mitosis. In Homo sapiens (Human), this protein is Centromere protein W (CENPW).